The chain runs to 522 residues: N-acetylgalactosamine-6-sulfatase (522 aa).

Residues 1–26 (MAAVVAATRWWQLLLVLSAAGMGASG) form the signal peptide. The tract at residues 27–379 (APQPPNILLL…PTLLQGRLMD (353 aa)) is catalytic domain. Residues Asp-39, Asp-40, and Cys-79 each contribute to the Ca(2+) site. Catalysis depends on Cys-79, which acts as the Nucleophile. A 3-oxoalanine (Cys) modification is found at Cys-79. His-142 is an active-site residue. Asn-204 carries an N-linked (GlcNAc...) asparagine glycan. Ca(2+) is bound by residues Asp-288 and Asn-289. Cys-308 and Cys-419 form a disulfide bridge. Residue Asn-423 is glycosylated (N-linked (GlcNAc...) asparagine). Disulfide bonds link Cys-489–Cys-518 and Cys-501–Cys-507.

Belongs to the sulfatase family. Homodimer. Requires Ca(2+) as cofactor. Post-translationally, the conversion to 3-oxoalanine (also known as C-formylglycine, FGly), of a serine or cysteine residue in prokaryotes and of a cysteine residue in eukaryotes, is critical for catalytic activity.

It is found in the lysosome. The enzyme catalyses Hydrolysis of the 6-sulfate groups of the N-acetyl-D-galactosamine 6-sulfate units of chondroitin sulfate and of the D-galactose 6-sulfate units of keratan sulfate.. This is N-acetylgalactosamine-6-sulfatase (GALNS) from Homo sapiens (Human).